A 227-amino-acid polypeptide reads, in one-letter code: Probable maleylacetoacetate isomerase 2 (227 aa).

The 84-residue stretch at 14 to 97 (IQPILYSYWR…YLEETRPQRP (84 aa)) folds into the GST N-terminal domain. Residues 24–29 (SSCSWR), glutamine 55, valine 69, 81–82 (ES), glutamine 121, and 125–127 (NLI) each bind glutathione. Positions 102 to 222 (DVHKRAKVRE…HPSNQPDCPP (121 aa)) constitute a GST C-terminal domain.

Belongs to the GST superfamily. Zeta family. It depends on glutathione as a cofactor.

It localises to the cytoplasm. It catalyses the reaction 4-maleylacetoacetate = 4-fumarylacetoacetate. The catalysed reaction is RX + glutathione = an S-substituted glutathione + a halide anion + H(+). The protein operates within amino-acid degradation; L-phenylalanine degradation; acetoacetate and fumarate from L-phenylalanine: step 5/6. Functionally, catalyzes the glutathione dependent oxygenation of dichloroacetic acid to glyoxylic acid in vitro. Has no glutathione thioltransferase activity with 4-hydroxynonenal (4-HNE), adrenochrome, phenethyl isothiocyanate (PEITC), 5-hydroperoxyeicosatetraenoic acid ((5S)-HpETE), prostaglandin A2 (PGA2) or 2-hydroxyethyldisulfide (HED). This chain is Probable maleylacetoacetate isomerase 2 (GstZ2), found in Drosophila melanogaster (Fruit fly).